A 292-amino-acid polypeptide reads, in one-letter code: Syntaxin-19 (292 aa).

Positions 1–24 are enriched in basic and acidic residues; it reads MKDRLPELKQRTKETELSKDKDVP. Positions 1–28 are disordered; the sequence is MKDRLPELKQRTKETELSKDKDVPTTEA. Residues 46 to 122 are a coiled coil; it reads VAERHLHEIQ…VKEVKKSEDE (77 aa). The t-SNARE coiled-coil homology domain maps to 209–271; that stretch reads LSEIEQRHKE…NTTKEKFGLA (63 aa).

It belongs to the syntaxin family. Interacts with EGFR.

Its subcellular location is the cell membrane. The protein resides in the cytoplasm. Its function is as follows. Plays a role in endosomal trafficking of the epidermal growth factor receptor (EGFR). In Bos taurus (Bovine), this protein is Syntaxin-19 (STX19).